The chain runs to 143 residues: Rheacalcin-2 (143 aa).

Intrachain disulfides connect C6-C17, C34-C139, and C114-C131. The C-type lectin domain maps to 13 to 140 (FDGRCFGFFP…CSDRKPFICE (128 aa)). S66 and S68 each carry phosphoserine.

It localises to the secreted. Its subcellular location is the extracellular space. The protein resides in the extracellular matrix. This is Rheacalcin-2 from Rhea americana (Greater rhea).